The chain runs to 224 residues: MYHIPDVLSTDQVAEFTRQLAQAEWVDGRVTVGSQGAAVKQNQQIDTRTPLYARLQAAVLDMLRGHPQFFSAALPRTISAPLFNRYGPGETYGFHVDGAVRQNGEAGWMRTDLSATLFLCDPESYEGGELVIEDTYGQHRVKLPAGHLVLYPASSLHCVTPVTRGVRQASFLWIQSMVRDDKQRAMLYDLDRTIQSLKARFGDGEEVLSLLNMYHNLLRQWTEV.

The Fe2OG dioxygenase domain maps to 77-176; it reads TISAPLFNRY…RQASFLWIQS (100 aa). His-95, Asp-97, and His-157 together coordinate Fe cation. Arg-167 is a 2-oxoglutarate binding site.

Fe(2+) serves as cofactor. It depends on L-ascorbate as a cofactor.

In Klebsiella pneumoniae subsp. pneumoniae (strain ATCC 700721 / MGH 78578), this protein is PKHD-type hydroxylase KPN78578_12210.